The sequence spans 109 residues: Putative transposase MJ0856.1 (109 aa).

The Zn(2+) site is built by C36, C39, C62, and C65.

Belongs to the transposase 35 family.

The chain is Putative transposase MJ0856.1 from Methanocaldococcus jannaschii (strain ATCC 43067 / DSM 2661 / JAL-1 / JCM 10045 / NBRC 100440) (Methanococcus jannaschii).